Reading from the N-terminus, the 279-residue chain is MSLKKFRPITPGTRFRVAASYDDVTTSTPEKSLVVSIKKSGGRNSQGKMTMRYIGGGHKQQYRIIDFKRDKHAIPAVVKTIEYDPNRTARIALLSYADGEKRYIIAPTGLEVGNTILSGPGIAPEVGNCLPLSDIPLGTVVHNIELKPGKGAAMARSAGTYAQLVAREGKYATLKLPSGEMRMVLVVCYASIGTVSNADHMNLTKGKAGATRWAGRRPRVRGVAMNPVDHPMGGGEGRSSGGHPRSRKGLYAKGGKTRSANKYSKNMIVKKRVNKRLSK.

A disordered region spans residues Val-223–Lys-279. The segment covering Ile-268–Lys-279 has biased composition (basic residues).

Belongs to the universal ribosomal protein uL2 family. Part of the 50S ribosomal subunit. Forms a bridge to the 30S subunit in the 70S ribosome.

One of the primary rRNA binding proteins. Required for association of the 30S and 50S subunits to form the 70S ribosome, for tRNA binding and peptide bond formation. It has been suggested to have peptidyltransferase activity; this is somewhat controversial. Makes several contacts with the 16S rRNA in the 70S ribosome. The sequence is that of Large ribosomal subunit protein uL2 from Cytophaga hutchinsonii (strain ATCC 33406 / DSM 1761 / CIP 103989 / NBRC 15051 / NCIMB 9469 / D465).